The chain runs to 215 residues: Uracil phosphoribosyltransferase (215 aa).

Residues arginine 77, arginine 102, and 129–137 each bind 5-phospho-alpha-D-ribose 1-diphosphate; that span reads DPMLATGGS. Uracil is bound by residues isoleucine 193 and 198–200; that span reads GDA. Aspartate 199 serves as a coordination point for 5-phospho-alpha-D-ribose 1-diphosphate.

Belongs to the UPRTase family. Requires Mg(2+) as cofactor.

The catalysed reaction is UMP + diphosphate = 5-phospho-alpha-D-ribose 1-diphosphate + uracil. Its pathway is pyrimidine metabolism; UMP biosynthesis via salvage pathway; UMP from uracil: step 1/1. Allosterically activated by GTP. Functionally, catalyzes the conversion of uracil and 5-phospho-alpha-D-ribose 1-diphosphate (PRPP) to UMP and diphosphate. In Corynebacterium urealyticum (strain ATCC 43042 / DSM 7109), this protein is Uracil phosphoribosyltransferase.